A 264-amino-acid polypeptide reads, in one-letter code: S-adenosylmethionine decarboxylase proenzyme (264 aa).

Residue serine 112 is the Schiff-base intermediate with substrate; via pyruvic acid of the active site. Serine 112 carries the post-translational modification Pyruvic acid (Ser); by autocatalysis. Histidine 117 functions as the Proton acceptor; for processing activity in the catalytic mechanism. The active-site Proton donor; for catalytic activity is cysteine 140.

Belongs to the prokaryotic AdoMetDC family. Type 2 subfamily. In terms of assembly, heterooctamer of four alpha and four beta chains arranged as a tetramer of alpha/beta heterodimers. It depends on pyruvate as a cofactor. Post-translationally, is synthesized initially as an inactive proenzyme. Formation of the active enzyme involves a self-maturation process in which the active site pyruvoyl group is generated from an internal serine residue via an autocatalytic post-translational modification. Two non-identical subunits are generated from the proenzyme in this reaction, and the pyruvate is formed at the N-terminus of the alpha chain, which is derived from the carboxyl end of the proenzyme. The post-translation cleavage follows an unusual pathway, termed non-hydrolytic serinolysis, in which the side chain hydroxyl group of the serine supplies its oxygen atom to form the C-terminus of the beta chain, while the remainder of the serine residue undergoes an oxidative deamination to produce ammonia and the pyruvoyl group blocking the N-terminus of the alpha chain.

It catalyses the reaction S-adenosyl-L-methionine + H(+) = S-adenosyl 3-(methylsulfanyl)propylamine + CO2. It functions in the pathway amine and polyamine biosynthesis; S-adenosylmethioninamine biosynthesis; S-adenosylmethioninamine from S-adenosyl-L-methionine: step 1/1. Catalyzes the decarboxylation of S-adenosylmethionine to S-adenosylmethioninamine (dcAdoMet), the propylamine donor required for the synthesis of the polyamines spermine and spermidine from the diamine putrescine. This is S-adenosylmethionine decarboxylase proenzyme from Salmonella typhi.